The following is a 445-amino-acid chain: Homogentisate 1,2-dioxygenase (445 aa).

N6-acetyllysine is present on K98. The Fe cation site is built by H335, E341, and H371. An N6-succinyllysine modification is found at K414.

It belongs to the homogentisate dioxygenase family. As to quaternary structure, homohexamer arranged as a dimer of trimers. It depends on Fe cation as a cofactor.

It catalyses the reaction homogentisate + O2 = 4-maleylacetoacetate + H(+). It functions in the pathway amino-acid degradation; L-phenylalanine degradation; acetoacetate and fumarate from L-phenylalanine: step 4/6. Functionally, catalyzes the conversion of homogentisate to maleylacetoacetate. This chain is Homogentisate 1,2-dioxygenase (Hgd), found in Mus musculus (Mouse).